The sequence spans 376 residues: MPNDLYAIYNRYTSRTLFFKYCATATLTHRLTRRLSLFTLKKCLARPQGRLFSLVNSIYFGGETLEEVQSTATFLARSGIACVLDYAVEGENDETQFDKAMENTLRLIEMSQQTDSLPFVVIKPSSLGSVAVYARQSERLALDEASASAWSRIVTRFSRLFDYARSHGVHVMVDAEQTAIQPAVDRLVLDMMREFNRDSAVITLTLQFYLKDQLRFLDECYQRACQDNFLFGVKVVRGAYLEEEKRVNGGVRCFATKQETDRSYNAAVDYIALRLDRIAPFFATHNEESLALIMSSESLRAGRTWVGQLYGLGDHITYSLLQTGFRVCKYLPYGPLDKSLPYLLRRIEENAVASATFKKENKLLQKELLRRLVGGM.

It belongs to the proline oxidase family.

Its pathway is antibiotic biosynthesis; carbapenem biosynthesis. The sequence is that of Carbapenem antibiotics biosynthesis protein CarD (carD) from Pectobacterium carotovorum subsp. carotovorum (Erwinia carotovora subsp. carotovora).